The primary structure comprises 210 residues: Large ribosomal subunit protein uL4 (210 aa).

The disordered stretch occupies residues 57 to 78 (VSGGGAKPWKQKGTGRARAGSN).

Belongs to the universal ribosomal protein uL4 family. Part of the 50S ribosomal subunit.

In terms of biological role, one of the primary rRNA binding proteins, this protein initially binds near the 5'-end of the 23S rRNA. It is important during the early stages of 50S assembly. It makes multiple contacts with different domains of the 23S rRNA in the assembled 50S subunit and ribosome. Its function is as follows. Forms part of the polypeptide exit tunnel. In Desulfovibrio desulfuricans (strain ATCC 27774 / DSM 6949 / MB), this protein is Large ribosomal subunit protein uL4.